The sequence spans 219 residues: RNA-free ribonuclease P (219 aa).

The protein belongs to the HARP family.

It carries out the reaction Endonucleolytic cleavage of RNA, removing 5'-extranucleotides from tRNA precursor.. In terms of biological role, RNA-free RNase P that catalyzes the removal of the 5'-leader sequence from pre-tRNA to produce the mature 5'-terminus. The sequence is that of RNA-free ribonuclease P from Staphylothermus marinus (strain ATCC 43588 / DSM 3639 / JCM 9404 / F1).